The sequence spans 237 residues: Ubiquinone biosynthesis O-methyltransferase (237 aa).

4 residues coordinate S-adenosyl-L-methionine: Arg38, Gly58, Asp79, and Met124.

The protein belongs to the methyltransferase superfamily. UbiG/COQ3 family.

The catalysed reaction is a 3-demethylubiquinol + S-adenosyl-L-methionine = a ubiquinol + S-adenosyl-L-homocysteine + H(+). It catalyses the reaction a 3-(all-trans-polyprenyl)benzene-1,2-diol + S-adenosyl-L-methionine = a 2-methoxy-6-(all-trans-polyprenyl)phenol + S-adenosyl-L-homocysteine + H(+). It participates in cofactor biosynthesis; ubiquinone biosynthesis. O-methyltransferase that catalyzes the 2 O-methylation steps in the ubiquinone biosynthetic pathway. In Acinetobacter baumannii (strain SDF), this protein is Ubiquinone biosynthesis O-methyltransferase.